The chain runs to 109 residues: Large ribosomal subunit protein eL30A (109 aa).

This sequence belongs to the eukaryotic ribosomal protein eL30 family. In terms of assembly, component of the large ribosomal subunit (LSU). Mature yeast ribosomes consist of a small (40S) and a large (60S) subunit. The 40S small subunit contains 1 molecule of ribosomal RNA (18S rRNA) and at least 33 different proteins. The large 60S subunit contains 3 rRNA molecules (25S, 5.8S and 5S rRNA) and at least 46 different proteins.

Its subcellular location is the cytoplasm. Functionally, component of the ribosome, a large ribonucleoprotein complex responsible for the synthesis of proteins in the cell. The small ribosomal subunit (SSU) binds messenger RNAs (mRNAs) and translates the encoded message by selecting cognate aminoacyl-transfer RNA (tRNA) molecules. The large subunit (LSU) contains the ribosomal catalytic site termed the peptidyl transferase center (PTC), which catalyzes the formation of peptide bonds, thereby polymerizing the amino acids delivered by tRNAs into a polypeptide chain. The nascent polypeptides leave the ribosome through a tunnel in the LSU and interact with protein factors that function in enzymatic processing, targeting, and the membrane insertion of nascent chains at the exit of the ribosomal tunnel. In Schizosaccharomyces pombe (strain 972 / ATCC 24843) (Fission yeast), this protein is Large ribosomal subunit protein eL30A (rpl3001).